A 523-amino-acid polypeptide reads, in one-letter code: Histidine ammonia-lyase (523 aa).

Positions 148 to 150 (ASG) form a cross-link, 5-imidazolinone (Ala-Gly). A 2,3-didehydroalanine (Ser) modification is found at S149.

This sequence belongs to the PAL/histidase family. Post-translationally, contains an active site 4-methylidene-imidazol-5-one (MIO), which is formed autocatalytically by cyclization and dehydration of residues Ala-Ser-Gly.

It is found in the cytoplasm. It catalyses the reaction L-histidine = trans-urocanate + NH4(+). It functions in the pathway amino-acid degradation; L-histidine degradation into L-glutamate; N-formimidoyl-L-glutamate from L-histidine: step 1/3. The chain is Histidine ammonia-lyase from Chloroflexus aurantiacus (strain ATCC 29366 / DSM 635 / J-10-fl).